A 178-amino-acid chain; its full sequence is Ras-like protein (178 aa).

Residue 1 to 6 (GGVGKS) participates in GTP binding. Positions 21–29 (YDPTIEDSY) match the Effector region motif. Residues 46 to 50 (DTAGQ) and 105 to 108 (NKCD) contribute to the GTP site. The residue at position 175 (Cys-175) is a Cysteine methyl ester. Cys-175 carries the S-geranylgeranyl cysteine lipid modification. Residues 176–178 (SIL) constitute a propeptide, removed in mature form.

Belongs to the small GTPase superfamily. Ras family.

The protein localises to the cell membrane. It carries out the reaction GTP + H2O = GDP + phosphate + H(+). Its activity is regulated as follows. Alternates between an inactive form bound to GDP and an active form bound to GTP. Activated by a guanine nucleotide-exchange factor (GEF) and inactivated by a GTPase-activating protein (GAP). Its function is as follows. Ras proteins bind GDP/GTP and possess intrinsic GTPase activity. The polypeptide is Ras-like protein (Artemia salina (Brine shrimp)).